The chain runs to 334 residues: Ferric enterobactin transport system permease protein FepD (334 aa).

Residues 1 to 9 lie on the Periplasmic side of the membrane; sequence MSGSVAVTR. A helical transmembrane segment spans residues 10 to 30; that stretch reads AIAVPGLLLLLIIATALSLLI. Residues 31–63 are Cytoplasmic-facing; sequence GAKSLPASVVLEAFSGTCQSADCTIVLDARLPR. The helical transmembrane segment at 64–84 threads the bilayer; it reads TLAGLLAGGALGLAGALMQTL. Residues 85–92 lie on the Periplasmic side of the membrane; it reads TRNPLADP. A helical membrane pass occupies residues 93–113; that stretch reads GLLGVNAGASFAIVLGAALFG. Topologically, residues 114–120 are cytoplasmic; it reads YSSAQEQ. The chain crosses the membrane as a helical span at residues 121 to 141; it reads LAMAFAGALVASLIVAFTGSQ. Residues 142 to 151 lie on the Periplasmic side of the membrane; that stretch reads GGGQLSPVRL. A helical transmembrane segment spans residues 152 to 172; the sequence is TLAGVALAAVLEGLTSGIALL. Topologically, residues 173–192 are cytoplasmic; sequence NPDVYDQLRFWQAGSLDIRN. A helical membrane pass occupies residues 193–213; that stretch reads LHTLKVVLIPVLIAGATALLL. Topologically, residues 214–241 are periplasmic; sequence SRALNSLSLGSDTATALGSRVARTQLIG. A helical transmembrane segment spans residues 242–262; it reads LLAITVLCGSATAIVGPIAFI. Over 263 to 279 the chain is Cytoplasmic; the sequence is GLMMPHMARWLVGADHR. The chain crosses the membrane as a helical span at residues 280–300; it reads WSLPVTLLATPALLLFADIIG. Residues 301-305 are Periplasmic-facing; it reads RVIVP. The chain crosses the membrane as a helical span at residues 306 to 326; sequence GELRVSVVSAFIGAPVLIFLV. At 327–334 the chain is on the cytoplasmic side; that stretch reads RRKTRGGA.

It belongs to the binding-protein-dependent transport system permease family. FecCD subfamily. In terms of assembly, the complex is composed of two ATP-binding proteins (FepC), two transmembrane proteins (FepD and FepG) and a solute-binding protein (FepB).

It localises to the cell inner membrane. In terms of biological role, part of the ABC transporter complex FepBDGC involved in ferric enterobactin uptake. Responsible for the translocation of the substrate across the membrane. The sequence is that of Ferric enterobactin transport system permease protein FepD (fepD) from Escherichia coli (strain K12).